The following is a 231-amino-acid chain: 3-oxoadipate CoA-transferase subunit A (231 aa).

25-31 (GGFGTAG) contacts CoA.

This sequence belongs to the 3-oxoacid CoA-transferase subunit A family. Heterodimer.

The catalysed reaction is 3-oxoadipate + succinyl-CoA = 3-oxoadipyl-CoA + succinate. It participates in aromatic compound metabolism; beta-ketoadipate pathway; acetyl-CoA and succinyl-CoA from 3-oxoadipate: step 1/2. The chain is 3-oxoadipate CoA-transferase subunit A (pcaI) from Pseudomonas putida (Arthrobacter siderocapsulatus).